A 146-amino-acid polypeptide reads, in one-letter code: Single-stranded DNA-binding protein, mitochondrial (146 aa).

The transit peptide at 1–16 (MLRNASAQILKQFVRH) directs the protein to the mitochondrion. Residues 29–140 (INKVQILGRV…IIADNIVFLS (112 aa)) enclose the SSB domain.

It localises to the mitochondrion. Its subcellular location is the mitochondrion matrix. The protein localises to the mitochondrion nucleoid. Its function is as follows. Binds preferentially and cooperatively to pyrimidine rich single-stranded DNA (ss-DNA). May be required to maintain the copy number of mitochondrial DNA (mtDNA) and play a crucial role during mtDNA replication. Required for retinal ganglion cell differentiation and retinal integrity. In Danio rerio (Zebrafish), this protein is Single-stranded DNA-binding protein, mitochondrial.